The primary structure comprises 346 residues: Cyclin-dependent kinase 20 (346 aa).

The 285-residue stretch at 4–288 (YCILGRIGEG…ASQALLHQYF (285 aa)) folds into the Protein kinase domain. ATP is bound by residues 10–18 (IGEGAHGIV) and Lys-33. Asp-127 functions as the Proton acceptor in the catalytic mechanism. Residues 298–324 (SELPIPQRPGGPTPKAHPGPPHVHDFH) are disordered. Over residues 303–318 (PQRPGGPTPKAHPGPP) the composition is skewed to pro residues.

Belongs to the protein kinase superfamily. CMGC Ser/Thr protein kinase family. CDC2/CDKX subfamily. As to quaternary structure, monomer. Interacts with TBC1D32 and MAK.

It localises to the nucleus. The protein resides in the cytoplasm. The protein localises to the cell projection. Its subcellular location is the cilium. The catalysed reaction is L-seryl-[protein] + ATP = O-phospho-L-seryl-[protein] + ADP + H(+). It carries out the reaction L-threonyl-[protein] + ATP = O-phospho-L-threonyl-[protein] + ADP + H(+). Functionally, required for high-level Shh responses in the developing neural tube. Together with TBC1D32, controls the structure of the primary cilium by coordinating assembly of the ciliary membrane and axoneme, allowing GLI2 to be properly activated in response to SHH signaling. Involved in cell growth. Activates CDK2, a kinase involved in the control of the cell cycle, by phosphorylating residue 'Thr-160'. The polypeptide is Cyclin-dependent kinase 20 (Cdk20) (Rattus norvegicus (Rat)).